The primary structure comprises 699 residues: Tectonic-like complex member Mks1 (699 aa).

Disordered stretches follow at residues 101–121 (RRSPISQHEGEMEKDKNEGEI) and 373–396 (DGFSEEADGEDEQELGDGLPIEED). Residues 108-119 (HEGEMEKDKNEG) show a composition bias toward basic and acidic residues. The region spanning 434 to 560 (KRVSLLLELQ…RLQCIRPLGN (127 aa)) is the C2 B9-type domain. The segment at 632 to 661 (LELGNDSSDDGDSNDDDVRSSSNPDTSRAT) is disordered.

Probable component of the tectonic-like complex (also named MKS complex), composed of B9d1, B9d2, Cc2d2a, Mks1 and tctn. Expressed in chordotonal neurons in the antennae (at protein level). Expressed in spermatids (at protein level).

Its subcellular location is the cytoplasm. It localises to the cytoskeleton. The protein localises to the cilium basal body. It is found in the microtubule organizing center. The protein resides in the centrosome. Its subcellular location is the centriole. Probable component of the tectonic-like complex (also named MKS complex), a complex localized at the transition zone of primary cilia. Required for ciliary structure and function. The polypeptide is Tectonic-like complex member Mks1 (Drosophila melanogaster (Fruit fly)).